The chain runs to 323 residues: Global nitrogen regulator NrpRI (323 aa).

Residues 11–76 (IEIMRVIHES…TLTDLGENEM (66 aa)) form a winged helix-turn-helix region. The NRD stretch occupies residues 86–323 (GFVISRIEEM…MLDYQTMKEI (238 aa)).

Belongs to the NrpR family. As to quaternary structure, forms a complex with NrpRII and the general archaeal transcription factors TBP and TFB. Interacts directly with NrpRII.

With respect to regulation, under nitrogen limitation, binding of 2-oxoglutarate to the NrpRI/NrpRII complex decreases the binding affinity of NrpRI to DNA as well as the binding affinity of NrpRII to TBP and TFB, which leads to removal of the complex from the operator, RNA polymerase recruitment and initiation of transcription. Its function is as follows. Plays a major role in nitrogen regulation. Under nitrogen sufficiency, binds to the nifH and the glnk1 promoters, leading to repression of the transcription of the genes. The sequence is that of Global nitrogen regulator NrpRI from Methanosarcina mazei (strain ATCC BAA-159 / DSM 3647 / Goe1 / Go1 / JCM 11833 / OCM 88) (Methanosarcina frisia).